The chain runs to 364 residues: Aminomethyltransferase (364 aa).

The protein belongs to the GcvT family. The glycine cleavage system is composed of four proteins: P, T, L and H.

It carries out the reaction N(6)-[(R)-S(8)-aminomethyldihydrolipoyl]-L-lysyl-[protein] + (6S)-5,6,7,8-tetrahydrofolate = N(6)-[(R)-dihydrolipoyl]-L-lysyl-[protein] + (6R)-5,10-methylene-5,6,7,8-tetrahydrofolate + NH4(+). Its function is as follows. The glycine cleavage system catalyzes the degradation of glycine. The protein is Aminomethyltransferase of Anoxybacillus flavithermus (strain DSM 21510 / WK1).